Here is a 192-residue protein sequence, read N- to C-terminus: Ribosome maturation factor RimP (192 aa).

Belongs to the RimP family.

The protein resides in the cytoplasm. Its function is as follows. Required for maturation of 30S ribosomal subunits. In Delftia acidovorans (strain DSM 14801 / SPH-1), this protein is Ribosome maturation factor RimP.